Consider the following 179-residue polypeptide: ATP-dependent protease subunit HslV (179 aa).

Thr-7 is a catalytic residue. Gly-162, Cys-165, and Thr-168 together coordinate Na(+).

This sequence belongs to the peptidase T1B family. HslV subfamily. In terms of assembly, a double ring-shaped homohexamer of HslV is capped on each side by a ring-shaped HslU homohexamer. The assembly of the HslU/HslV complex is dependent on binding of ATP.

The protein resides in the cytoplasm. It catalyses the reaction ATP-dependent cleavage of peptide bonds with broad specificity.. Allosterically activated by HslU binding. In terms of biological role, protease subunit of a proteasome-like degradation complex believed to be a general protein degrading machinery. This Bordetella petrii (strain ATCC BAA-461 / DSM 12804 / CCUG 43448) protein is ATP-dependent protease subunit HslV.